We begin with the raw amino-acid sequence, 269 residues long: tRNA pseudouridine synthase A (269 aa).

The Nucleophile role is filled by aspartate 55. Tyrosine 111 contributes to the substrate binding site.

The protein belongs to the tRNA pseudouridine synthase TruA family.

It carries out the reaction uridine(38/39/40) in tRNA = pseudouridine(38/39/40) in tRNA. Functionally, formation of pseudouridine at positions 38, 39 and 40 in the anticodon stem and loop of transfer RNAs. This chain is tRNA pseudouridine synthase A, found in Methanosarcina mazei (strain ATCC BAA-159 / DSM 3647 / Goe1 / Go1 / JCM 11833 / OCM 88) (Methanosarcina frisia).